Consider the following 66-residue polypeptide: Large ribosomal subunit protein bL35 (66 aa).

This sequence belongs to the bacterial ribosomal protein bL35 family.

The protein is Large ribosomal subunit protein bL35 of Parvibaculum lavamentivorans (strain DS-1 / DSM 13023 / NCIMB 13966).